The following is a 682-amino-acid chain: Probable xyloglucan glycosyltransferase 6 (682 aa).

2 helical membrane-spanning segments follow: residues 109-129 (LIKG…AAYF) and 173-193 (IVLF…CFWI). D260 is a catalytic residue. The substrate site is built by D319 and D321. Residue D413 is part of the active site. A run of 2 helical transmembrane segments spans residues 491 to 511 (LILP…TMFF) and 516 to 536 (LPSW…IIPA). Position 608 is a phosphoserine (S608). 2 helical membrane-spanning segments follow: residues 632 to 651 (LYRT…VRSL) and 657 to 677 (IHFY…LDLI).

This sequence belongs to the glycosyltransferase 2 family. Plant cellulose synthase-like C subfamily. Homodimer. As to expression, mainly expressed in flowers and seeds, and, to a lower extent, in seedlings, roots, leaves and stems.

The protein resides in the golgi apparatus membrane. Its function is as follows. Probable beta-1,4-glucan synthase rather involved in the synthesis of the xyloglucan backbone than cellulose. Seems to work simultaneously with xyloglucan 6-xylosyltransferase. Xyloglucan is a noncellulosic polysaccharides of plant cell wall and consists of a glucan backbone substituted by xylose, galactose and fucose. The protein is Probable xyloglucan glycosyltransferase 6 of Arabidopsis thaliana (Mouse-ear cress).